We begin with the raw amino-acid sequence, 1695 residues long: Helicase swr1 (1695 aa).

A compositionally biased stretch (polar residues) spans 1 to 10 (MQDGSLNGLS). A disordered region spans residues 1–229 (MQDGSLNGLS…SHSNVTSTPT (229 aa)). Over residues 11 to 25 (HHNDERVNHENEDKS) the composition is skewed to basic and acidic residues. Composition is skewed to polar residues over residues 126–137 (AQRSTVNKNLSG) and 145–156 (SPLSMSVSQSGI). Over residues 187 to 207 (RSPPRQTPSRTRSQSSATSAP) the composition is skewed to low complexity. An HSA domain is found at 334–408 (PEQQEEPPQQ…EEVRVKRKQL (75 aa)). Disordered stretches follow at residues 467–738 (SDFL…ASAP) and 772–821 (LRQN…LKTP). The span at 499–514 (SETEDEDEVDDDEGLT) shows a compositional bias: acidic residues. Residues 538–554 (ASDTSESSDGTRTSHIL) are compositionally biased toward polar residues. The span at 572-616 (IELDEVDPMLLDDSEDESTDMDDDMGDSDEDGDADGTDSDDESDD) shows a compositional bias: acidic residues. Over residues 626–638 (SKDRVLNDAHRFD) the composition is skewed to basic and acidic residues. Residues 656-678 (FDDDGQSVSVDEDGDEELEDADE) show a composition bias toward acidic residues. Over residues 685 to 697 (GPSNSVSISQSTA) the composition is skewed to polar residues. A compositionally biased stretch (acidic residues) spans 705–718 (TPDEEPDEQAEVVD). The Helicase ATP-binding domain maps to 842 to 1007 (AGLYNNHING…WSLLFFLMPS (166 aa)). Position 855–862 (855–862 (DEMGLGKT)) interacts with ATP. Positions 958 to 961 (DEAH) match the DEAH box motif. Residues 1382–1532 (RLDKLLRDLK…DVVIQEGEFT (151 aa)) form the Helicase C-terminal domain. 2 disordered regions span residues 1590–1625 (AQKE…PQEG) and 1669–1695 (EPLV…KRRR). The segment covering 1678-1695 (TKKKSKKGKEHRLSKRRR) has biased composition (basic residues).

Belongs to the SNF2/RAD54 helicase family. SWR1 subfamily. Component of the SWR1 chromatin-remodeling complex.

Its subcellular location is the nucleus. The catalysed reaction is ATP + H2O = ADP + phosphate + H(+). Functionally, catalytic component of the SWR1 complex which mediates the ATP-dependent exchange of histone H2A for the H2A variant HZT1 leading to transcriptional regulation of selected genes by chromatin remodeling. This chain is Helicase swr1 (swr1), found in Aspergillus fumigatus (strain ATCC MYA-4609 / CBS 101355 / FGSC A1100 / Af293) (Neosartorya fumigata).